The sequence spans 413 residues: Transcription factor E2F4 (413 aa).

A disordered region spans residues 1–20 (MAEAGPQAPPPPGTPSRHEK). A2 carries the post-translational modification N-acetylalanine. A DNA-binding region spans residues 16 to 85 (SRHEKSLGLL…KNSIQWKGVG (70 aa)). Positions 43–65 (LKLAADTLAVRQKRRIYDITNVL) are leucine-zipper. The DEF box signature appears at 48–85 (DTLAVRQKRRIYDITNVLEGIGLIEKKSKNSIQWKGVG). The dimerization stretch occupies residues 86–181 (PGCNTREIAD…GLNGQKKYQI (96 aa)). The segment at 211-340 (PPEDLLQSPS…PSTSFEPIKA (130 aa)) is disordered. Composition is skewed to polar residues over residues 234–249 (AQSQ…QLTP) and 293–306 (TLDT…ALLD). A compositionally biased stretch (low complexity) spans 307 to 327 (SSSSSSSSSSSSSNSNSSSSS). Residues 337 to 413 (PIKADPTGVL…DLFDVPVLNL (77 aa)) are transactivation. The residue at position 384 (S384) is a Phosphoserine. The HCFC1-binding-motif (HBM) signature appears at 389-392 (DHDY). Residues 390–407 (HDYIYNLDESEGVCDLFD) form an interaction with RBL1 and RBL2 region.

This sequence belongs to the E2F/DP family. Component of the DRTF1/E2F transcription factor complex. Binds cooperatively with TFDP1/Dp-1 to E2F sites. The E2F4/TFDP1 dimer interacts preferentially with pocket protein RBL1, which inhibits the E2F transactivation domain. Lower affinity interaction has been found with retinoblastoma protein RB1. Interacts with TRRAP, which probably mediates its interaction with histone acetyltransferase complexes, leading to transcription activation. Interacts with HCFC1. Component of the DREAM complex (also named LINC complex) at least composed of E2F4, E2F5, LIN9, LIN37, LIN52, LIN54, MYBL1, MYBL2, RBL1, RBL2, RBBP4, TFDP1 and TFDP2. The complex exists in quiescent cells where it represses cell cycle-dependent genes. It dissociates in S phase when LIN9, LIN37, LIN52 and LIN54 form a subcomplex that binds to MYBL2. Interacts with PML (isoform PML-1, isoform PML-2, isoform PML-3, isoform PML-4 and isoform PML-5). Interacts with CEBPA (when phosphorylated). Post-translationally, differentially phosphorylated in vivo. In terms of tissue distribution, found in all tissue examined including heart, brain, placenta, lung, liver, skeletal muscle, kidney and pancreas.

The protein resides in the nucleus. In terms of biological role, transcription activator that binds DNA cooperatively with DP proteins through the E2 recognition site, 5'-TTTC[CG]CGC-3' found in the promoter region of a number of genes whose products are involved in cell cycle regulation or in DNA replication. The DRTF1/E2F complex functions in the control of cell-cycle progression from G1 to S phase. E2F4 binds with high affinity to RBL1 and RBL2. In some instances can also bind RB1. Specifically required for multiciliate cell differentiation: together with MCIDAS and E2F5, binds and activate genes required for centriole biogenesis. This Homo sapiens (Human) protein is Transcription factor E2F4 (E2F4).